We begin with the raw amino-acid sequence, 95 residues long: Integration host factor subunit beta (95 aa).

Residues 56–76 (RAPRTGRNPKTGTSVDLDGKY) form a disordered region.

This sequence belongs to the bacterial histone-like protein family. As to quaternary structure, heterodimer of an alpha and a beta chain.

Its function is as follows. This protein is one of the two subunits of integration host factor, a specific DNA-binding protein that functions in genetic recombination as well as in transcriptional and translational control. This is Integration host factor subunit beta from Shewanella sediminis (strain HAW-EB3).